Reading from the N-terminus, the 156-residue chain is Acyl carrier protein, mitochondrial (156 aa).

The transit peptide at 1 to 68 directs the protein to the mitochondrion; it reads MAVRVLCACV…GRVTQLCRQY (68 aa). Residues 77–152 enclose the Carrier domain; it reads EGIKDRVLYV…EIVDYIADKK (76 aa). Position 88 is an N6-acetyllysine (Lys88). Ser112 bears the O-(pantetheine 4'-phosphoryl)serine mark.

As to quaternary structure, mammalian complex I is composed of 45 different subunits. Interacts with ETFRF1. Identified in a complex composed of MALSU1, MIEF1 upstream open reading frame protein and NDUFAB1; within the trimeric complex MIEF1 upstream open reading frame protein functions as a bridging scaffold that interacts with MALSU1 on one side, and with NDUFAB1 on the other side. The complex interacts with the mitochondrial large ribosomal subunit. Interacts with alpha-1-microglobulin chain; this interaction is required for the maintenance of mitochondrial redox homeostasis. Component of the mitochondrial core iron-sulfur cluster (ISC) complex composed of NFS1, LYRM4, NDUFAB1, ISCU, FXN, and FDX2; this complex is a heterohexamer containing two copies of each monomer. Component of the cyteine desulfurase complex composed of NFS1, LYRM4 and NDUFAB1; this complex contributes to the stability and cysteine desulfurase activity of NFS1. Phosphopantetheinylation at Ser-112 is essential for interactions with LYR motif-containing proteins.

The protein localises to the mitochondrion. Carrier of the growing fatty acid chain in fatty acid biosynthesis. Accessory and non-catalytic subunit of the mitochondrial membrane respiratory chain NADH dehydrogenase (Complex I), which functions in the transfer of electrons from NADH to the respiratory chain. Accessory protein, of the core iron-sulfur cluster (ISC) assembly complex, that regulates, in association with LYRM4, the stability and the cysteine desulfurase activity of NFS1 and participates in the [2Fe-2S] clusters assembly on the scaffolding protein ISCU. The core iron-sulfur cluster (ISC) assembly complex is involved in the de novo synthesis of a [2Fe-2S] cluster, the first step of the mitochondrial iron-sulfur protein biogenesis. This process is initiated by the cysteine desulfurase complex (NFS1:LYRM4:NDUFAB1) that produces persulfide which is delivered on the scaffold protein ISCU in a FXN-dependent manner. Then this complex is stabilized by FDX2 which provides reducing equivalents to accomplish the [2Fe-2S] cluster assembly. Finally, the [2Fe-2S] cluster is transferred from ISCU to chaperone proteins, including HSCB, HSPA9 and GLRX5. The protein is Acyl carrier protein, mitochondrial of Bos taurus (Bovine).